Reading from the N-terminus, the 37-residue chain is Mastoparan-VT (37 aa).

Positions 1–22 (EALADPIADPVAGPNPEADPEA) are excised as a propeptide. AXPX repeat units lie at residues 4–7 (ADPI), 8–11 (ADPV), 12–15 (AGPN), and 18–21 (ADPE). Leucine 36 carries the leucine amide modification.

This sequence belongs to the MCD family. Mastoparan subfamily. In terms of tissue distribution, expressed by the venom gland.

It is found in the secreted. It localises to the target cell membrane. Functionally, antimicrobial peptide with potent activity against both Gram-positive (S.aureus MIC=50 ug/ml, and B.subtilis MIC=25 ug/ml) and Gram-negative bacteria (P.aeruginosa MIC=25 ug/ml, E.coli MIC=3-50 ug/ml, K.pneumoniae MIC=25 ug/ml). Exhibits little hemolytic activity on human erythrocytes. The chain is Mastoparan-VT from Vespa tropica (Greater banded hornet).